The chain runs to 160 residues: Putative flagellin YvzB (160 aa).

This sequence belongs to the bacterial flagellin family. Interacts with FliW.

It is found in the bacterial flagellum. In Bacillus subtilis (strain 168), this protein is Putative flagellin YvzB (yvzB).